The primary structure comprises 72 residues: Small ribosomal subunit protein bS18 (72 aa).

The protein belongs to the bacterial ribosomal protein bS18 family. Part of the 30S ribosomal subunit. Forms a tight heterodimer with protein bS6.

Its function is as follows. Binds as a heterodimer with protein bS6 to the central domain of the 16S rRNA, where it helps stabilize the platform of the 30S subunit. The polypeptide is Small ribosomal subunit protein bS18 (Francisella philomiragia subsp. philomiragia (strain ATCC 25017 / CCUG 19701 / FSC 153 / O#319-036)).